The chain runs to 189 residues: uncharacterized protein (189 aa).

A signal peptide spans 1 to 19 (MKRVLFFLLMIFVSFGVIA).

This is an uncharacterized protein from Escherichia coli (strain K12).